A 298-amino-acid chain; its full sequence is MFTAKCAMQNIRNVAIVGSGQMGSGIAQVTASSGFNVMLADVNKKALDRAMKAISQSVTHLSKKQKGTDKEKSDFVTLTMSRIKTCNNVSTAVADADLIIEAAIENIDLKRGIFAQIEQSCKKDSILTTNTSSFLLEDVAKGLQDKTRFGGLHFFNPVPVMKLLEVIRSDDTSDETYATLIKFGTAVGKTTVACKDSPGFIVNRLLIPYFFEAARMYERGDASMTDIDEAMKLGAGHPMGPFELADYIGLDTVKFVMDGWAAKYPEVQLFEASPLVDKLVAEGKLGRKTGDGFYSYKK.

The protein belongs to the 3-hydroxyacyl-CoA dehydrogenase family. In terms of assembly, homodimer.

The protein localises to the mitochondrion matrix. The enzyme catalyses a (3S)-3-hydroxyacyl-CoA + NAD(+) = a 3-oxoacyl-CoA + NADH + H(+). It participates in lipid metabolism; fatty acid beta-oxidation. The polypeptide is Probable 3-hydroxyacyl-CoA dehydrogenase F54C8.1 (Caenorhabditis elegans).